A 207-amino-acid chain; its full sequence is Putative tributyltin chloride resistance protein (207 aa).

A slt-type domain region spans residues 37-122 (NLPIELALMP…YHAIAALNLG (86 aa)). Residue glutamate 49 is part of the active site.

It belongs to the transglycosylase Slt family.

This Alteromonas sp. (strain M-1) protein is Putative tributyltin chloride resistance protein (tbtA).